An 83-amino-acid chain; its full sequence is U4-theraphotoxin-Hhn1x (83 aa).

A signal peptide spans 1 to 20; that stretch reads MTLIAILTCAAALVLHTTAA. The propeptide occupies 21–46; that stretch reads EELEAESQLMEVGMPDTELEAVDEER. 3 disulfide bridges follow: Cys50–Cys64, Cys54–Cys75, and Cys69–Cys80.

The protein belongs to the neurotoxin 12 (Hwtx-2) family. 02 (Hwtx-2) subfamily. In terms of tissue distribution, expressed by the venom gland.

The protein localises to the secreted. Postsynaptic neurotoxin. This Cyriopagopus hainanus (Chinese bird spider) protein is U4-theraphotoxin-Hhn1x.